The following is a 319-amino-acid chain: Acetyl-coenzyme A carboxylase carboxyl transferase subunit alpha (319 aa).

In terms of domain architecture, CoA carboxyltransferase C-terminal spans 32–293 (NVDAEVRALR…KAVLLNELDA (262 aa)).

This sequence belongs to the AccA family. As to quaternary structure, acetyl-CoA carboxylase is a heterohexamer composed of biotin carboxyl carrier protein (AccB), biotin carboxylase (AccC) and two subunits each of ACCase subunit alpha (AccA) and ACCase subunit beta (AccD).

The protein localises to the cytoplasm. It catalyses the reaction N(6)-carboxybiotinyl-L-lysyl-[protein] + acetyl-CoA = N(6)-biotinyl-L-lysyl-[protein] + malonyl-CoA. It participates in lipid metabolism; malonyl-CoA biosynthesis; malonyl-CoA from acetyl-CoA: step 1/1. Component of the acetyl coenzyme A carboxylase (ACC) complex. First, biotin carboxylase catalyzes the carboxylation of biotin on its carrier protein (BCCP) and then the CO(2) group is transferred by the carboxyltransferase to acetyl-CoA to form malonyl-CoA. In Xanthomonas campestris pv. campestris (strain B100), this protein is Acetyl-coenzyme A carboxylase carboxyl transferase subunit alpha.